The chain runs to 60 residues: Truncated protein A35 homolog (60 aa).

It belongs to the chordopoxvirinae A35 protein family.

This is Truncated protein A35 homolog (A38R) from Variola virus (isolate Human/India/Ind3/1967) (VARV).